Reading from the N-terminus, the 223-residue chain is Dephospho-CoA kinase (223 aa).

The DPCK domain maps to 3–204; it reads VFGLSGGAGS…AGRHRFRVAR (202 aa). 11 to 16 is an ATP binding site; sequence GSGKST.

Belongs to the CoaE family.

The protein localises to the cytoplasm. It carries out the reaction 3'-dephospho-CoA + ATP = ADP + CoA + H(+). It participates in cofactor biosynthesis; coenzyme A biosynthesis; CoA from (R)-pantothenate: step 5/5. Catalyzes the phosphorylation of the 3'-hydroxyl group of dephosphocoenzyme A to form coenzyme A. This chain is Dephospho-CoA kinase, found in Anaplasma marginale (strain St. Maries).